Consider the following 497-residue polypeptide: Acetyltransferase FGR3 (497 aa).

Ca(2+)-binding residues include Asp-221 and Ile-224. CoA-binding residues include Lys-255 and Asp-303. A Ca(2+)-binding site is contributed by Asp-386. Residue Thr-396 coordinates CoA. Asp-462 is a binding site for Ca(2+). Positions 477–497 are disordered; that stretch reads DASEAKKANGTNGTNGVNGSS. The segment covering 485–497 has biased composition (low complexity); sequence NGTNGTNGVNGSS.

It belongs to the trichothecene 3-O-acetyltransferase family.

It participates in secondary metabolite biosynthesis. Its function is as follows. Acetyltransferase; part of the gene cluster that mediates the biosynthesis of the tetraketides fugralins such as linear fugralin A and cyclic fugralin B, volatile compounds that play a role in the asexual reproductive cycle but are not involved in pathogenicity. One of the key features of fugralins is the presence of a double methyl group, which is only rarely encountered in fungal secondary metabolites. As the fugralins cluster does not contain an independent methyltransferase, the PKS FGR1 is probably responsible for adding two methyl groups to the same carbon atom. Fugralin B is similar to fugralin A except for a cyclization between the carboxylic acid C-8 and the alcohol on C-4 resulting in a six membered lactone ring, probably catalyzed by the cyclase FGR4. The exact role of the individual cluster genes remains unknown and further work is needed to unravel the biosynthetic pathway. This Gibberella zeae (strain ATCC MYA-4620 / CBS 123657 / FGSC 9075 / NRRL 31084 / PH-1) (Wheat head blight fungus) protein is Acetyltransferase FGR3.